We begin with the raw amino-acid sequence, 561 residues long: Putative transport protein YbjL (561 aa).

Helical transmembrane passes span 8 to 28, 32 to 52, 66 to 86, 94 to 114, and 158 to 178; these read LLNGNYILLLFVVLALGLCLG, LGSIQLGNSIGVLVVSLLLGQ, FMLFIFCVGVEAGPNFFSIFF, MLALVMVGSALVIALGLGKLF, and NLSLGYALTYLIGLVSLIVGA. RCK C-terminal domains follow at residues 200–288 and 292–373; these read RGLD…SFRN and VFDR…RIGF. 5 helical membrane-spanning segments follow: residues 383-403, 406-426, 451-471, 475-495, and 540-560; these read LLAFCAFFVIGLMIGMITFQF, FSFGMGNAAGLLFAGIMLGFM, VFMAGVGLSAGSGINNGLGAI, MLIAGLIVSLVPVVICFLFGA, and AIANVLLTLAGTIIVMVWPGL.

Belongs to the AAE transporter (TC 2.A.81) family. YbjL subfamily.

The protein resides in the cell membrane. The polypeptide is Putative transport protein YbjL (Shigella flexneri).